A 221-amino-acid chain; its full sequence is MKFATVLAFATAAGAAFASPLASSETTEAGQLSKRQSINYVQNYNGNAANFKYDQHAGTYSTRWTNPPDFVVGLGWSPGNSYRTIKFSGSYSSSSSSYSAVYGWLNNPLTEYYVVENYSYDPCSNSGAQVVGSVTSDGSNYKICKHTQYDQPSIQGTKTFGQYFSVRANKRNSGSVTLSKHFNAWKQHGFANGAANPDFNYQVFATEAFGGTGSASMSVSG.

The N-terminal stretch at 1 to 18 (MKFATVLAFATAAGAAFA) is a signal peptide. In terms of domain architecture, GH11 spans 23-220 (SSETTEAGQL…GTGSASMSVS (198 aa)). E111 functions as the Nucleophile in the catalytic mechanism. N-linked (GlcNAc...) asparagine glycosylation occurs at N117. E207 serves as the catalytic Proton donor.

The protein belongs to the glycosyl hydrolase 11 (cellulase G) family.

Its subcellular location is the secreted. It carries out the reaction Endohydrolysis of (1-&gt;4)-beta-D-xylosidic linkages in xylans.. The protein operates within glycan degradation; xylan degradation. Its function is as follows. Endo-1,4-beta-xylanase involved in the hydrolysis of xylan, a major structural heterogeneous polysaccharide found in plant biomass representing the second most abundant polysaccharide in the biosphere, after cellulose. The chain is Endo-1,4-beta-xylanase 11A (XYN11A) from Mycosarcoma maydis (Corn smut fungus).